Here is a 65-residue protein sequence, read N- to C-terminus: Large ribosomal subunit protein bL35 (65 aa).

The segment covering M1–R16 has biased composition (basic residues). Positions M1–G20 are disordered.

This sequence belongs to the bacterial ribosomal protein bL35 family.

This chain is Large ribosomal subunit protein bL35, found in Streptococcus pyogenes serotype M1.